The chain runs to 272 residues: MARLAAFDMDGTLLMPDHHLGEKTLSTLARLRERDITLTFATGRHALEMQHILGALSLDAYLITGNGTRVHSLEGELLHRDDLPADVAELVLYQQWDTRASMHIFNDDGWFTGKEIPALLQAFVYSGFRYQIIDVKKMPLGSVTKICFCGDHDDLTRLQIQLYEALGERAHLCFSATDCLEVLPVGCNKGAALTVLTQHLGLSLRDCMAFGDAMNDREMLGSVGSGFIMGNAMPQLRAELPHLPVIGHCRNQAVSHYLTHWLDYPHLPYSPE.

Residue aspartate 8 is the Nucleophile of the active site. Aspartate 8, aspartate 10, and aspartate 212 together coordinate Mg(2+).

The protein belongs to the HAD-like hydrolase superfamily. Cof family. Mg(2+) is required as a cofactor.

The enzyme catalyses 4-amino-2-methyl-5-(diphosphooxymethyl)pyrimidine + H2O = 4-amino-2-methyl-5-(phosphooxymethyl)pyrimidine + phosphate + H(+). Catalyzes the hydrolysis of 4-amino-2-methyl-5-hydroxymethylpyrimidine pyrophosphate (HMP-PP) to 4-amino-2-methyl-5-hydroxymethylpyrimidine phosphate (HMP-P). The protein is HMP-PP phosphatase of Escherichia coli (strain UTI89 / UPEC).